A 316-amino-acid chain; its full sequence is 4-hydroxyphenylacetate decarboxylase activating enzyme (316 aa).

One can recognise a Radical SAM core domain in the interval 20–307 (HDGPGCRTTV…QDIFLDNGIA (288 aa)). The [4Fe-4S] cluster site is built by cysteine 34, cysteine 38, cysteine 41, cysteine 60, cysteine 66, cysteine 69, and cysteine 105. Residue 40–42 (WCA) coordinates S-adenosyl-L-methionine. A 4Fe-4S ferredoxin-type domain is found at 84–115 (NKPVIDWNICKDCESFECVNSCYYNAFKLCAK). S-adenosyl-L-methionine is bound by residues glycine 144, 193–195 (DIK), and histidine 267.

Belongs to the organic radical-activating enzymes family. Monomer. [4Fe-4S] cluster serves as cofactor.

The catalysed reaction is glycyl-[protein] + reduced [flavodoxin] + S-adenosyl-L-methionine = glycin-2-yl radical-[protein] + semiquinone [flavodoxin] + 5'-deoxyadenosine + L-methionine + H(+). In terms of biological role, catalyzes activation of 4-hydroxyphenylacetate decarboxylase under anaerobic conditions by generation of an organic free radical on a glycine residue, via a homolytic cleavage of S-adenosyl-L-methionine (SAM). The sequence is that of 4-hydroxyphenylacetate decarboxylase activating enzyme from Clostridioides difficile (strain 630) (Peptoclostridium difficile).